Here is a 380-residue protein sequence, read N- to C-terminus: Guanine nucleotide-binding protein subunit beta (380 aa).

WD repeat units follow at residues 64–103, 106–145, 155–195, 203–243, 247–286, 296–335, and 342–380; these read GHSG…KTHA, LHCP…DRDG, GHKG…RISI, GHTA…RAVR, GHEG…QLQV, NELP…VVLN, and SHEG…RKIV.

This sequence belongs to the WD repeat G protein beta family. G proteins are composed of 3 units, alpha, beta and gamma. Interacts with the gamma subunits RGG1 and RGG2.

It is found in the cell membrane. Functionally, guanine nucleotide-binding proteins (G proteins) are involved as modulators or transducers in various transmembrane signaling systems. The beta and gamma chains are required for the GTPase activity, for replacement of GDP by GTP, and for G protein-effector interaction. The protein is Guanine nucleotide-binding protein subunit beta of Oryza sativa subsp. indica (Rice).